We begin with the raw amino-acid sequence, 235 residues long: Intron-encoded endonuclease I-SceI (235 aa).

Belongs to the LAGLIDADG endonuclease family. As to quaternary structure, monomer. The cofactor is Mg(2+).

It localises to the mitochondrion. Its function is as follows. Mitochondrial DNA endonuclease involved in intron homing. It introduces a specific double-strand break in the DNA of the 21S rRNA gene and thus mediates the insertion of an intron, containing its own coding sequence (group I intron), into an intronless gene. Specifically recognizes and cleaves the sequence 5'-TAGGGATAACAGGGTAAT-3'. The sequence is that of Intron-encoded endonuclease I-SceI (SCEI) from Saccharomyces cerevisiae (strain ATCC 204508 / S288c) (Baker's yeast).